Reading from the N-terminus, the 830-residue chain is MHYDFKEVERDVQEKWDFTVNVKDVQCYVLEMFPYPSGNIHMGHLRNYTIGDVIARYKRACGLHVFHPIGWDAFGLPAENAALSYNISPQVWTRKNIDNMRSQLKSIGLSYNWDKEFATCDAEYYKYEQEFFLDFLKYGLAYRKESLVNWDPVDQTVLANEQVIDGRGWRSGAIIEKRKLSQWFLKITDFAAELLDDLKSLNQWPEKVKLMQERWIGKSEGVIIDFQIVGINEVLQVFTTSPHTLFGASFIAVSFDHPILKYVNDVQLIQLIDSFDRKDLIDDSSINTVEKFGINSGLVAKHPLLDMDLPIYVANFVLMNYGTGAVFCCPAHDQRDFDFAKKYSLPIRQVIFPEQNVDLEREAYVGSGIMGCSGFLDGMTVDDAKKSMIEKLISLGICKKQVYYRLHDWGISRQRYWGCPIPIIYCKKCGIVPVDKKDLPITLPEDIDFTKSGNPLDNHPTWKYTKCPSCGADAKRETDTFDTFFESSWYFAAFCGIGKGIDKDVCNKLLPVDYYIGGIEHAVLHLLYSRFFCRALTRCGYFDVKEPFSSLITQGMVCHSTYLDKYGNYLFPEDGKKMIQEGKYVTVGRAEKMSKSKKNVVHLDDIIDKYGADSARLFILSDTPPERDIEWLDENIEGVSRYLNKLWKMIVDYDQIEQNFVFNDISNDAVEYRMNVHKILNDITNDLEFYRFNCAVAKFRELSNVISEMIRLSINHHVVSEAIYILIRVVEPFIPHIAEKLWQIVGGQGMLCNQLWPKVDSQLLIKKNVNIVVQVNGKFIKAVSVPNDIDDDTLKSIALEVAQRRIGNSSVKNIYIIPARVINIVITKSS.

The 'HIGH' region motif lies at proline 34–histidine 44. The 'KMSKS' region motif lies at lysine 592 to serine 596. Residue lysine 595 participates in ATP binding.

The protein belongs to the class-I aminoacyl-tRNA synthetase family.

It is found in the cytoplasm. The enzyme catalyses tRNA(Leu) + L-leucine + ATP = L-leucyl-tRNA(Leu) + AMP + diphosphate. In Ehrlichia ruminantium (strain Gardel), this protein is Leucine--tRNA ligase.